The chain runs to 415 residues: Nuclear hormone receptor family member nhr-153 (415 aa).

The segment at residues Pro26–Ala105 is a DNA-binding region (nuclear receptor). NR C4-type zinc fingers lie at residues Cys29–Cys49 and Cys65–Cys88. Residues Asp170 to Ile406 form the NR LBD domain.

Belongs to the nuclear hormone receptor family.

Its subcellular location is the nucleus. Orphan nuclear receptor. The sequence is that of Nuclear hormone receptor family member nhr-153 (nhr-153) from Caenorhabditis elegans.